We begin with the raw amino-acid sequence, 237 residues long: Large ribosomal subunit protein uL1 (237 aa).

The protein belongs to the universal ribosomal protein uL1 family. As to quaternary structure, part of the 50S ribosomal subunit.

Functionally, binds directly to 23S rRNA. The L1 stalk is quite mobile in the ribosome, and is involved in E site tRNA release. Its function is as follows. Protein L1 is also a translational repressor protein, it controls the translation of the L11 operon by binding to its mRNA. This chain is Large ribosomal subunit protein uL1, found in Synechococcus sp. (strain ATCC 27144 / PCC 6301 / SAUG 1402/1) (Anacystis nidulans).